The chain runs to 158 residues: Phosphopantetheine adenylyltransferase (158 aa).

Thr9 provides a ligand contact to substrate. ATP-binding positions include 9-10 (TF) and His17. Positions 41, 73, and 87 each coordinate substrate. ATP contacts are provided by residues 88 to 90 (GLR), Glu98, and 123 to 129 (YAYISSS).

It belongs to the bacterial CoaD family. In terms of assembly, homohexamer. Mg(2+) is required as a cofactor.

Its subcellular location is the cytoplasm. The enzyme catalyses (R)-4'-phosphopantetheine + ATP + H(+) = 3'-dephospho-CoA + diphosphate. It participates in cofactor biosynthesis; coenzyme A biosynthesis; CoA from (R)-pantothenate: step 4/5. Functionally, reversibly transfers an adenylyl group from ATP to 4'-phosphopantetheine, yielding dephospho-CoA (dPCoA) and pyrophosphate. The sequence is that of Phosphopantetheine adenylyltransferase from Allochromatium vinosum (strain ATCC 17899 / DSM 180 / NBRC 103801 / NCIMB 10441 / D) (Chromatium vinosum).